A 297-amino-acid chain; its full sequence is Small ribosomal subunit protein uS2 (297 aa).

Positions 263-289 are enriched in low complexity; the sequence is AAPTSWEADGGDWAASSAAPAGESWAE. Residues 263-297 are disordered; the sequence is AAPTSWEADGGDWAASSAAPAGESWAETQPAEAKW.

The protein belongs to the universal ribosomal protein uS2 family. In terms of assembly, component of the small ribosomal subunit. Mature ribosomes consist of a small (40S) and a large (60S) subunit. The 40S subunit contains about 33 different proteins and 1 molecule of RNA (18S). The 60S subunit contains about 49 different proteins and 3 molecules of RNA (25S, 5.8S and 5S). Interacts with rps21.

It is found in the cytoplasm. Its function is as follows. Required for the assembly and/or stability of the 40S ribosomal subunit. Required for the processing of the 20S rRNA-precursor to mature 18S rRNA in a late step of the maturation of 40S ribosomal subunits. The chain is Small ribosomal subunit protein uS2 (rps0) from Neosartorya fischeri (strain ATCC 1020 / DSM 3700 / CBS 544.65 / FGSC A1164 / JCM 1740 / NRRL 181 / WB 181) (Aspergillus fischerianus).